The sequence spans 372 residues: tRNA-specific 2-thiouridylase MnmA (372 aa).

ATP-binding positions include 7–14 (GLSGGVDS) and methionine 33. Residues 104–106 (NPD) are interaction with target base in tRNA. Cysteine 109 serves as the catalytic Nucleophile. Cysteine 109 and cysteine 202 form a disulfide bridge. An ATP-binding site is contributed by glycine 134. The interval 152-154 (KDQ) is interaction with tRNA. Cysteine 202 functions as the Cysteine persulfide intermediate in the catalytic mechanism. Positions 310-311 (RY) are interaction with tRNA.

It belongs to the MnmA/TRMU family.

The protein localises to the cytoplasm. It catalyses the reaction S-sulfanyl-L-cysteinyl-[protein] + uridine(34) in tRNA + AH2 + ATP = 2-thiouridine(34) in tRNA + L-cysteinyl-[protein] + A + AMP + diphosphate + H(+). Catalyzes the 2-thiolation of uridine at the wobble position (U34) of tRNA, leading to the formation of s(2)U34. The polypeptide is tRNA-specific 2-thiouridylase MnmA (Mesomycoplasma hyopneumoniae (strain 7448) (Mycoplasma hyopneumoniae)).